We begin with the raw amino-acid sequence, 488 residues long: Proline--tRNA ligase (488 aa).

Belongs to the class-II aminoacyl-tRNA synthetase family. ProS type 3 subfamily. In terms of assembly, homodimer.

It localises to the cytoplasm. It catalyses the reaction tRNA(Pro) + L-proline + ATP = L-prolyl-tRNA(Pro) + AMP + diphosphate. Functionally, catalyzes the attachment of proline to tRNA(Pro) in a two-step reaction: proline is first activated by ATP to form Pro-AMP and then transferred to the acceptor end of tRNA(Pro). The chain is Proline--tRNA ligase from Pyrobaculum arsenaticum (strain DSM 13514 / JCM 11321 / PZ6).